The primary structure comprises 122 residues: Small ribosomal subunit protein uS13 (122 aa).

The interval 96–122 (LPVHGQRTKTNARTRKGPARTVAGKKK) is disordered.

Belongs to the universal ribosomal protein uS13 family. Part of the 30S ribosomal subunit. Forms a loose heterodimer with protein S19. Forms two bridges to the 50S subunit in the 70S ribosome.

Its function is as follows. Located at the top of the head of the 30S subunit, it contacts several helices of the 16S rRNA. In the 70S ribosome it contacts the 23S rRNA (bridge B1a) and protein L5 of the 50S subunit (bridge B1b), connecting the 2 subunits; these bridges are implicated in subunit movement. Contacts the tRNAs in the A and P-sites. The sequence is that of Small ribosomal subunit protein uS13 from Geotalea daltonii (strain DSM 22248 / JCM 15807 / FRC-32) (Geobacter daltonii).